An 876-amino-acid chain; its full sequence is DNA gyrase subunit A (876 aa).

The Topo IIA-type catalytic domain occupies 34–532 (LPDVRDGLKP…NSVDINIEDL (499 aa)). Tyrosine 122 acts as the O-(5'-phospho-DNA)-tyrosine intermediate in catalysis. Positions 559–565 (QRRGGKG) match the GyrA-box motif. Residues 844–876 (DEELDAIDGSAAEGDEDIAPEADTDDDIAEDEE) are disordered. The span at 856–876 (EGDEDIAPEADTDDDIAEDEE) shows a compositional bias: acidic residues.

It belongs to the type II topoisomerase GyrA/ParC subunit family. As to quaternary structure, heterotetramer, composed of two GyrA and two GyrB chains. In the heterotetramer, GyrA contains the active site tyrosine that forms a transient covalent intermediate with DNA, while GyrB binds cofactors and catalyzes ATP hydrolysis.

Its subcellular location is the cytoplasm. The catalysed reaction is ATP-dependent breakage, passage and rejoining of double-stranded DNA.. Functionally, a type II topoisomerase that negatively supercoils closed circular double-stranded (ds) DNA in an ATP-dependent manner to modulate DNA topology and maintain chromosomes in an underwound state. Negative supercoiling favors strand separation, and DNA replication, transcription, recombination and repair, all of which involve strand separation. Also able to catalyze the interconversion of other topological isomers of dsDNA rings, including catenanes and knotted rings. Type II topoisomerases break and join 2 DNA strands simultaneously in an ATP-dependent manner. This chain is DNA gyrase subunit A, found in Klebsiella oxytoca.